The chain runs to 121 residues: uncharacterized protein (121 aa).

Residues 8-37 are a coiled coil; the sequence is KQLMVCRDEIKKLKLKEKEAKNRILTYLKN.

This is an uncharacterized protein from Aedes vexans (Inland floodwater mosquito).